The following is a 173-amino-acid chain: Co-chaperone protein HscB (173 aa).

The J domain occupies 2-74 (DYFTLLGMPN…LSRAEYMLSL (73 aa)).

This sequence belongs to the HscB family. In terms of assembly, interacts with HscA and stimulates its ATPase activity. Interacts with IscU.

Its function is as follows. Co-chaperone involved in the maturation of iron-sulfur cluster-containing proteins. Seems to help targeting proteins to be folded toward HscA. The protein is Co-chaperone protein HscB of Proteus mirabilis (strain HI4320).